The following is a 609-amino-acid chain: Serine/threonine-protein phosphatase 4 regulatory subunit 2 (609 aa).

Ser-68 is modified (phosphoserine). The tract at residues 175–569 (NNNGNADEGS…EEARVSPSAT (395 aa)) is disordered. Low complexity predominate over residues 183 to 194 (GSSPGAGSAGCA). Positions 201-225 (RSDDNDQPKAKKAKLEIDGEERSEA) are enriched in basic and acidic residues. Ser-223 and Ser-226 each carry phosphoserine. A compositionally biased stretch (basic and acidic residues) spans 233 to 244 (VATRVKNEKDEK). Ser-252 carries the post-translational modification Phosphoserine. Residues 258 to 270 (EIEEPDEEVDEAD) are compositionally biased toward acidic residues. Basic and acidic residues-rich tracts occupy residues 310–351 (IEAE…KPDG) and 375–400 (EPVK…KQDD). A compositionally biased stretch (acidic residues) spans 401–410 (IDSTETDDAP). Positions 414 to 462 (KPAEEKIASSESKPKTKSEDDPEAETKKSQPEKTETEAAEKSVSDEKQA) are enriched in basic and acidic residues. Thr-602 carries the phosphothreonine modification. A Phosphoserine modification is found at Ser-603.

It belongs to the PPP4R2 family. In terms of assembly, serine/threonine-protein phosphatase 4 (PP4) occurs in different assemblies of the catalytic and one or more regulatory subunits. Probably part of a PP4 PPP4C-PPP4R2-PPP4R3 complex containing Pp4-19C, PPP4R2r and flfl.

Regulatory subunit of serine/threonine-protein phosphatase 4 (PP4). The probable PP4 complex Pp4-19C-PPP4R2r-flfl (PPP4C-PPP4R2-PPP4R3) is required to prevent caspase induced cell death (in vitro). This Drosophila melanogaster (Fruit fly) protein is Serine/threonine-protein phosphatase 4 regulatory subunit 2 (PPP4R2r).